A 389-amino-acid polypeptide reads, in one-letter code: tRNA pseudouridine synthase Pus10 (389 aa).

The Nucleophile role is filled by aspartate 213. Tyrosine 278 and tyrosine 350 together coordinate substrate.

It belongs to the pseudouridine synthase Pus10 family.

It catalyses the reaction uridine(54) in tRNA = pseudouridine(54) in tRNA. The catalysed reaction is uridine(55) in tRNA = pseudouridine(55) in tRNA. In terms of biological role, responsible for synthesis of pseudouridine from uracil-54 and uracil-55 in the psi GC loop of transfer RNAs. The polypeptide is tRNA pseudouridine synthase Pus10 (Thermoplasma acidophilum (strain ATCC 25905 / DSM 1728 / JCM 9062 / NBRC 15155 / AMRC-C165)).